The sequence spans 113 residues: UPF0102 protein Mfla_2283 (113 aa).

This sequence belongs to the UPF0102 family.

This chain is UPF0102 protein Mfla_2283, found in Methylobacillus flagellatus (strain ATCC 51484 / DSM 6875 / VKM B-1610 / KT).